Reading from the N-terminus, the 422-residue chain is DNA-binding transcriptional activator AdeR (422 aa).

This sequence belongs to the CdaR family.

Its function is as follows. Activates ald expression in response to alanine availability and is important for normal sporulation in B.subtilis. In Bacillus subtilis (strain 168), this protein is DNA-binding transcriptional activator AdeR.